Here is a 166-residue protein sequence, read N- to C-terminus: Small ribosomal subunit protein uS5 (166 aa).

The 64-residue stretch at 12–75 folds into the S5 DRBM domain; sequence YIEKLVQVNR…EAARRNMIQV (64 aa).

Belongs to the universal ribosomal protein uS5 family. As to quaternary structure, part of the 30S ribosomal subunit. Contacts proteins S4 and S8.

Functionally, with S4 and S12 plays an important role in translational accuracy. Located at the back of the 30S subunit body where it stabilizes the conformation of the head with respect to the body. This chain is Small ribosomal subunit protein uS5, found in Pseudomonas fluorescens (strain Pf0-1).